We begin with the raw amino-acid sequence, 89 residues long: Small ribosomal subunit protein uS15 (89 aa).

This sequence belongs to the universal ribosomal protein uS15 family. As to quaternary structure, part of the 30S ribosomal subunit. Forms a bridge to the 50S subunit in the 70S ribosome, contacting the 23S rRNA.

One of the primary rRNA binding proteins, it binds directly to 16S rRNA where it helps nucleate assembly of the platform of the 30S subunit by binding and bridging several RNA helices of the 16S rRNA. Its function is as follows. Forms an intersubunit bridge (bridge B4) with the 23S rRNA of the 50S subunit in the ribosome. This Pelotomaculum thermopropionicum (strain DSM 13744 / JCM 10971 / SI) protein is Small ribosomal subunit protein uS15.